The primary structure comprises 376 residues: Queuine tRNA-ribosyltransferase (376 aa).

Asp89 (proton acceptor) is an active-site residue. Substrate contacts are provided by residues 89 to 93 (DSGGF), Asp143, Gln194, and Gly221. The tract at residues 252 to 258 (GVGLPSN) is RNA binding. The active-site Nucleophile is Asp271. The segment at 276–280 (ARNGR) is RNA binding; important for wobble base 34 recognition. Zn(2+) is bound by residues Cys309, Cys311, Cys314, and His340.

Belongs to the queuine tRNA-ribosyltransferase family. In terms of assembly, homodimer. Within each dimer, one monomer is responsible for RNA recognition and catalysis, while the other monomer binds to the replacement base PreQ1. Requires Zn(2+) as cofactor.

The enzyme catalyses 7-aminomethyl-7-carbaguanine + guanosine(34) in tRNA = 7-aminomethyl-7-carbaguanosine(34) in tRNA + guanine. Its pathway is tRNA modification; tRNA-queuosine biosynthesis. Its function is as follows. Catalyzes the base-exchange of a guanine (G) residue with the queuine precursor 7-aminomethyl-7-deazaguanine (PreQ1) at position 34 (anticodon wobble position) in tRNAs with GU(N) anticodons (tRNA-Asp, -Asn, -His and -Tyr). Catalysis occurs through a double-displacement mechanism. The nucleophile active site attacks the C1' of nucleotide 34 to detach the guanine base from the RNA, forming a covalent enzyme-RNA intermediate. The proton acceptor active site deprotonates the incoming PreQ1, allowing a nucleophilic attack on the C1' of the ribose to form the product. After dissociation, two additional enzymatic reactions on the tRNA convert PreQ1 to queuine (Q), resulting in the hypermodified nucleoside queuosine (7-(((4,5-cis-dihydroxy-2-cyclopenten-1-yl)amino)methyl)-7-deazaguanosine). This chain is Queuine tRNA-ribosyltransferase, found in Clostridium tetani (strain Massachusetts / E88).